Consider the following 486-residue polypeptide: Transcription factor aptf-4 (486 aa).

Disordered stretches follow at residues 25–49 (CEPS…SAKM) and 150–173 (LSTT…NQEK). Over residues 150-169 (LSTTSANFTPDWNTTTNGPC) the composition is skewed to polar residues. Positions 301–430 (QRQRKVTCFS…IVEQAALYCE (130 aa)) are H-S-H (helix-span-helix), dimerization.

This sequence belongs to the AP-2 family. As to quaternary structure, binds DNA as a dimer.

Its subcellular location is the nucleus. Functionally, sequence-specific DNA-binding protein that interacts with enhancer elements to regulate transcription of selected genes. Required for neuroblast and epidermal morphogenesis, perhaps acting in cooperation with transcription factor aptf-2. The chain is Transcription factor aptf-4 from Caenorhabditis elegans.